The chain runs to 358 residues: Alanine racemase (358 aa).

Catalysis depends on Lys35, which acts as the Proton acceptor; specific for D-alanine. The residue at position 35 (Lys35) is an N6-(pyridoxal phosphate)lysine. Arg130 provides a ligand contact to substrate. The Proton acceptor; specific for L-alanine role is filled by Tyr255. Met303 serves as a coordination point for substrate.

The protein belongs to the alanine racemase family. It depends on pyridoxal 5'-phosphate as a cofactor.

It catalyses the reaction L-alanine = D-alanine. Its pathway is amino-acid biosynthesis; D-alanine biosynthesis; D-alanine from L-alanine: step 1/1. Functionally, catalyzes the interconversion of L-alanine and D-alanine. May also act on other amino acids. The sequence is that of Alanine racemase (alr) from Shewanella baltica (strain OS155 / ATCC BAA-1091).